Here is a 392-residue protein sequence, read N- to C-terminus: Formate-dependent phosphoribosylglycinamide formyltransferase (392 aa).

N(1)-(5-phospho-beta-D-ribosyl)glycinamide-binding positions include glutamate 22–leucine 23 and glutamate 82. Residues arginine 114, lysine 155, serine 160–glutamine 165, glutamate 195–valine 198, and glutamate 203 contribute to the ATP site. The region spanning arginine 119–leucine 308 is the ATP-grasp domain. Mg(2+) is bound by residues glutamate 267 and glutamate 279. N(1)-(5-phospho-beta-D-ribosyl)glycinamide contacts are provided by residues aspartate 286, lysine 355, and arginine 362 to arginine 363.

Belongs to the PurK/PurT family. As to quaternary structure, homodimer.

It carries out the reaction N(1)-(5-phospho-beta-D-ribosyl)glycinamide + formate + ATP = N(2)-formyl-N(1)-(5-phospho-beta-D-ribosyl)glycinamide + ADP + phosphate + H(+). Its pathway is purine metabolism; IMP biosynthesis via de novo pathway; N(2)-formyl-N(1)-(5-phospho-D-ribosyl)glycinamide from N(1)-(5-phospho-D-ribosyl)glycinamide (formate route): step 1/1. In terms of biological role, involved in the de novo purine biosynthesis. Catalyzes the transfer of formate to 5-phospho-ribosyl-glycinamide (GAR), producing 5-phospho-ribosyl-N-formylglycinamide (FGAR). Formate is provided by PurU via hydrolysis of 10-formyl-tetrahydrofolate. The polypeptide is Formate-dependent phosphoribosylglycinamide formyltransferase (Escherichia coli O157:H7).